The following is a 447-amino-acid chain: Rab GDP dissociation inhibitor alpha (447 aa).

This sequence belongs to the Rab GDI family. In terms of assembly, interacts with RHOH. Interacts with the non-phosphorylated forms of RAB1A, RAB3A, RAB5A, RAB5B, RAB5C, RAB8A, RAB8B, RAB10, RAB12, RAB35, and RAB43.

The protein resides in the cytoplasm. Its subcellular location is the golgi apparatus. The protein localises to the trans-Golgi network. Functionally, regulates the GDP/GTP exchange reaction of most Rab proteins by inhibiting the dissociation of GDP from them, and the subsequent binding of GTP to them. Promotes the dissociation of GDP-bound Rab proteins from the membrane and inhibits their activation. Promotes the dissociation of RAB1A, RAB3A, RAB5A and RAB10 from membranes. This is Rab GDP dissociation inhibitor alpha (GDI1) from Pongo pygmaeus (Bornean orangutan).